The chain runs to 200 residues: DNA-directed RNA polymerase subunit 7-like protein (200 aa).

The protein belongs to the eukaryotic RPB7/RPC8 RNA polymerase subunit family.

The protein localises to the nucleus. This Arabidopsis thaliana (Mouse-ear cress) protein is DNA-directed RNA polymerase subunit 7-like protein (NRPB7L).